The primary structure comprises 554 residues: Glutamine--tRNA ligase (554 aa).

The 'HIGH' region motif lies at 34–44 (PEPNGYLHIGH). Residues 35 to 37 (EPN) and 41 to 47 (HIGHAKS) each bind ATP. The L-glutamine site is built by D67 and Y212. ATP is bound by residues T231, 261–262 (RL), and 269–271 (MSK). Positions 268-272 (VMSKR) match the 'KMSKS' region motif. Residues 317–324 (TKQDNTIE) form an interaction with tRNA region.

This sequence belongs to the class-I aminoacyl-tRNA synthetase family. Monomer.

It localises to the cytoplasm. The enzyme catalyses tRNA(Gln) + L-glutamine + ATP = L-glutaminyl-tRNA(Gln) + AMP + diphosphate. This Shigella flexneri serotype 5b (strain 8401) protein is Glutamine--tRNA ligase.